Here is a 396-residue protein sequence, read N- to C-terminus: Pectate lyase 5 (396 aa).

Positions 1–25 (MGIKHCCYILYFTLALVTLLQPVRS) are cleaved as a signal peptide. Asn36 carries N-linked (GlcNAc...) asparagine glycosylation. Cys53 and Cys70 are joined by a disulfide. Ca(2+) contacts are provided by Asp193, Asp217, and Asp221. Residue Arg273 is part of the active site.

Belongs to the polysaccharide lyase 1 family. Amb a subfamily. In terms of assembly, monomer. The cofactor is Ca(2+). The N-terminus is blocked. As to expression, pollen and flowers.

The enzyme catalyses Eliminative cleavage of (1-&gt;4)-alpha-D-galacturonan to give oligosaccharides with 4-deoxy-alpha-D-galact-4-enuronosyl groups at their non-reducing ends.. Its pathway is glycan metabolism; pectin degradation; 2-dehydro-3-deoxy-D-gluconate from pectin: step 2/5. In terms of biological role, has pectate lyase activity. This Ambrosia artemisiifolia (Common ragweed) protein is Pectate lyase 5.